The primary structure comprises 230 residues: Large ribosomal subunit protein uL1 (230 aa).

The protein belongs to the universal ribosomal protein uL1 family. In terms of assembly, part of the 50S ribosomal subunit.

In terms of biological role, binds directly to 23S rRNA. The L1 stalk is quite mobile in the ribosome, and is involved in E site tRNA release. Protein L1 is also a translational repressor protein, it controls the translation of the L11 operon by binding to its mRNA. The chain is Large ribosomal subunit protein uL1 from Lactobacillus johnsonii (strain CNCM I-12250 / La1 / NCC 533).